Reading from the N-terminus, the 291-residue chain is E3 ubiquitin-protein ligase RZFP34 (291 aa).

The CHY-type zinc finger occupies 20–96 (IGSGHYGCSH…VQQNCSNCGV (77 aa)). Zn(2+) contacts are provided by Cys27, His29, Cys40, Cys41, Cys47, Cys50, His51, His66, Cys78, Cys81, Cys91, Cys94, Cys103, Cys106, His119, Cys120, Cys123, Cys126, His136, Cys137, Cys140, Cys143, His152, and Cys154. Residues 98–162 (MGKYFCSKCK…QCVEGAMHHN (65 aa)) form a CTCHY-type zinc finger. The segment at 163–206 (CPVCFEYLFDSTRDITVLRCGHTMHLECTKDMGLHNRYTCPVCS) adopts an RING-type; atypical zinc-finger fold. Ser173 carries the phosphoserine modification. Phosphothreonine is present on Thr178. Ser208 carries the post-translational modification Phosphoserine. The segment at 271–291 (QRGSDSHSCSSGMPQVVGSTG) is disordered.

In terms of assembly, interacts with SRK2D/2SNRK2.2, SRK2I/SNRK2.3 and SRK2E/SNRK2.6. In terms of processing, phosphorylated at Ser-173, Thr-178 and Ser-208 by SRK2E/SNRK2.6 in response to abscisic acid (ABA). Phosphorylation activates its E3 ubiquitin-protein ligase activity. Expressed in roots, leaves, and anthers and stigma of open flowers.

The protein localises to the nucleus. It is found in the cytoplasm. The protein resides in the endoplasmic reticulum. It catalyses the reaction S-ubiquitinyl-[E2 ubiquitin-conjugating enzyme]-L-cysteine + [acceptor protein]-L-lysine = [E2 ubiquitin-conjugating enzyme]-L-cysteine + N(6)-ubiquitinyl-[acceptor protein]-L-lysine.. It functions in the pathway protein modification; protein ubiquitination. In terms of biological role, possesses E3 ubiquitin-protein ligase activity in vitro. Mediates mainly 'Lys-48'-linked polyubiquitination. Promotes abscisic acid (ABA)-induced stomatal closure, reactive oxygen species (ROS) production and drought tolerance. Involved in the regulation of stomatal aperture. This is E3 ubiquitin-protein ligase RZFP34 from Arabidopsis thaliana (Mouse-ear cress).